We begin with the raw amino-acid sequence, 307 residues long: UDP-3-O-acyl-N-acetylglucosamine deacetylase (307 aa).

Zn(2+) contacts are provided by His78, His241, and Asp245. His268 acts as the Proton donor in catalysis.

Belongs to the LpxC family. It depends on Zn(2+) as a cofactor.

It catalyses the reaction a UDP-3-O-[(3R)-3-hydroxyacyl]-N-acetyl-alpha-D-glucosamine + H2O = a UDP-3-O-[(3R)-3-hydroxyacyl]-alpha-D-glucosamine + acetate. It participates in glycolipid biosynthesis; lipid IV(A) biosynthesis; lipid IV(A) from (3R)-3-hydroxytetradecanoyl-[acyl-carrier-protein] and UDP-N-acetyl-alpha-D-glucosamine: step 2/6. Catalyzes the hydrolysis of UDP-3-O-myristoyl-N-acetylglucosamine to form UDP-3-O-myristoylglucosamine and acetate, the committed step in lipid A biosynthesis. This Variovorax paradoxus (strain S110) protein is UDP-3-O-acyl-N-acetylglucosamine deacetylase.